A 182-amino-acid chain; its full sequence is ATP synthase subunit b, chloroplastic (182 aa).

The chain crosses the membrane as a helical span at residues V33–L51.

This sequence belongs to the ATPase B chain family. In terms of assembly, F-type ATPases have 2 components, F(1) - the catalytic core - and F(0) - the membrane proton channel. F(1) has five subunits: alpha(3), beta(3), gamma(1), delta(1), epsilon(1). F(0) has four main subunits: a(1), b(1), b'(1) and c(10-14). The alpha and beta chains form an alternating ring which encloses part of the gamma chain. F(1) is attached to F(0) by a central stalk formed by the gamma and epsilon chains, while a peripheral stalk is formed by the delta, b and b' chains.

It localises to the plastid. Its subcellular location is the chloroplast thylakoid membrane. Its function is as follows. F(1)F(0) ATP synthase produces ATP from ADP in the presence of a proton or sodium gradient. F-type ATPases consist of two structural domains, F(1) containing the extramembraneous catalytic core and F(0) containing the membrane proton channel, linked together by a central stalk and a peripheral stalk. During catalysis, ATP synthesis in the catalytic domain of F(1) is coupled via a rotary mechanism of the central stalk subunits to proton translocation. In terms of biological role, component of the F(0) channel, it forms part of the peripheral stalk, linking F(1) to F(0). This Guillardia theta (Cryptophyte) protein is ATP synthase subunit b, chloroplastic.